The sequence spans 146 residues: Ferredoxin-thioredoxin reductase catalytic chain, chloroplastic (146 aa).

The N-terminal 31 residues, 1–31 (MNLQAVSCSFGFLSSPLGVTPRTSFRRFVIR), are a transit peptide targeting the chloroplast. Cysteine 85 is a [4Fe-4S] cluster binding site. Catalysis depends on cysteine 87, which acts as the Nucleophile. Residues cysteine 87 and cysteine 117 are joined by a disulfide bond. Cysteine 104, cysteine 106, and cysteine 115 together coordinate [4Fe-4S] cluster.

The protein belongs to the ferredoxin thioredoxin reductase beta subunit family. In terms of assembly, heterodimer of subunit A (variable subunit) and subunit B (catalytic subunit). Heterodimeric FTR forms a complex with ferredoxin and thioredoxin. The cofactor is [4Fe-4S] cluster.

The protein localises to the plastid. The protein resides in the chloroplast. The catalysed reaction is [thioredoxin]-disulfide + 2 reduced [2Fe-2S]-[ferredoxin] + 2 H(+) = [thioredoxin]-dithiol + 2 oxidized [2Fe-2S]-[ferredoxin]. In terms of biological role, catalytic subunit of the ferredoxin-thioredoxin reductase (FTR), which catalyzes the two-electron reduction of thioredoxins by the electrons provided by reduced ferredoxin. This is Ferredoxin-thioredoxin reductase catalytic chain, chloroplastic from Arabidopsis thaliana (Mouse-ear cress).